The following is a 795-amino-acid chain: Phenylalanine--tRNA ligase beta subunit (795 aa).

The region spanning 39–148 (AGSFNGVVVG…ADAPLGTDIR (110 aa)) is the tRNA-binding domain. Positions 401–476 (PKRATITLRR…RVYGYNNIPD (76 aa)) constitute a B5 domain. D454, D460, E463, and E464 together coordinate Mg(2+). Positions 701–794 (SRFPANRRDI…LKERFQASLR (94 aa)) constitute an FDX-ACB domain.

The protein belongs to the phenylalanyl-tRNA synthetase beta subunit family. Type 1 subfamily. Tetramer of two alpha and two beta subunits. Mg(2+) serves as cofactor.

It is found in the cytoplasm. The catalysed reaction is tRNA(Phe) + L-phenylalanine + ATP = L-phenylalanyl-tRNA(Phe) + AMP + diphosphate + H(+). The chain is Phenylalanine--tRNA ligase beta subunit from Salmonella paratyphi A (strain ATCC 9150 / SARB42).